Here is a 371-residue protein sequence, read N- to C-terminus: Phosphatase IMPL1, chloroplastic (371 aa).

The transit peptide at 1–60 directs the protein to the chloroplast; it reads MGRSLIFSGNMSLRISHLPRSSLPLQNPISGRTVNRTFRYRCTRILSNSFKSTTRLQTKA. Valine 61 bears the N-acetylvaline mark. Positions 148, 165, 167, and 168 each coordinate Mg(2+). Substrate is bound at residue glutamate 148. Substrate contacts are provided by residues 167-170, 273-275, glutamate 292, and aspartate 299; these read LDGT and GAA. Aspartate 299 lines the Mg(2+) pocket.

It belongs to the inositol monophosphatase superfamily. The cofactor is Mg(2+). In terms of tissue distribution, ubiquitous. Expressed in pistil and seed endosperm.

It localises to the plastid. Its subcellular location is the chloroplast stroma. The catalysed reaction is a myo-inositol phosphate + H2O = myo-inositol + phosphate. It participates in polyol metabolism; myo-inositol biosynthesis; myo-inositol from D-glucose 6-phosphate: step 2/2. Its function is as follows. Phosphatase acting preferentially on D-myoinositol 1-phosphate (D-Ins 1-P). The chain is Phosphatase IMPL1, chloroplastic (IMPL1) from Arabidopsis thaliana (Mouse-ear cress).